Consider the following 634-residue polypeptide: MANPDVENLFSLCDSESKGFLTMEDLKKVCPQLDDNDLRFIFNELDRDGSGKIEKMEFLQGFQETVQHGESRGLNGMQRRASVAFDDGGPVFRRDELVFESESDSSSRPAIRVYDEEHYHSESDTNINIDFSVPCQEEVLVLYEQLQSSGVPALLRKFERVVGSFHKELSEKKHENERLQRIYASEREMYNRRMEEMESEVDQQLELIEMKARQEERERLTKEKEEMRERMSEEMSEMRTNIERLQRMEKVLERENERLNHQKDLSDKLKVVNEENNDLRQNLAENHLELAMIKSELAQVRADFDQKQDELSARRDQASHATEESESVRKQLQLLFDANRKLHETNESLRDALDSRASVLRQFNLRTPSPGLINSNRNSVENFQTSTNMFKSVPLHAISDEEPDPETSLILDDAHSLQGMDIAEGLVGLNDANGPAERTFRIVMCGDAAVGKSSFVMRVIRRQFTNQLPSTLGVDFHVKTVNVDGRNVALQLWDTAGQERFRSLCKSYFRRADGAILVYDVCAEHSFLRVRDWIETIKESTERSIPIILVGNKVDMRLQTPGAVAKTDGASMAAAMGVLFMETSALDGSNIDNAMLALTRELMAVEDVEIRSTGVVLNPAATKKGGCFSKCRGS.

EF-hand domains lie at Asp-5 to Leu-33 and Leu-33 to His-68. 5 residues coordinate Ca(2+): Asp-46, Asp-48, Ser-50, Lys-52, and Glu-57. Residues Leu-169 to Glu-310 adopt a coiled-coil conformation. Disordered regions lie at residues Glu-216–Glu-237 and Gln-308–Val-328. Residues Ala-449–Ser-454, Asn-552–Asp-555, and Ala-585–Leu-586 contribute to the GTP site. A propeptide spans Arg-632–Ser-634 (removed in mature form).

It belongs to the small GTPase superfamily. Rab family. Homodimer.

Its subcellular location is the cytoplasm. The protein localises to the perinuclear region. In terms of biological role, binds GTP and GDP. Plays a role in uterine seam cell development. The chain is Ras and EF-hand domain-containing protein homolog from Caenorhabditis briggsae.